The following is a 542-amino-acid chain: Calcium/calmodulin-dependent protein kinase type II subunit beta (542 aa).

Residues 14–272 (YQLYEDIGKG…AHEALKHPWV (259 aa)) form the Protein kinase domain. Tyr17 carries the phosphotyrosine modification. Residues 20–28 (IGKGAFSVV) and Lys43 each bind ATP. Asp136 (proton acceptor) is an active-site residue. Positions 283–292 (HRQETVECLK) are autoinhibitory domain. A Phosphothreonine; by autocatalysis modification is found at Thr287. The interval 291 to 301 (LKKFNARRKLK) is calmodulin-binding. Thr306 and Thr307 each carry phosphothreonine; by autocatalysis. Residues 349-376 (ADGVKPQTNSTKNSSAITSPKGSLPPAA) form a disordered region. The segment covering 354–369 (PQTNSTKNSSAITSPK) has biased composition (polar residues). 4 positions are modified to phosphoserine: Ser367, Ser371, Ser394, and Ser397. Residues Thr400 and Thr401 each carry the phosphothreonine modification.

It belongs to the protein kinase superfamily. CAMK Ser/Thr protein kinase family. CaMK subfamily. CAMK2 is composed of 4 different chains: alpha (CAMK2A), beta (CAMK2B), gamma (CAMK2G), and delta (CAMK2D). The different isoforms assemble into homo- or heteromultimeric holoenzymes composed of 12 subunits with two hexameric rings stacked one on top of the other. Interacts with SYNGAP1, CAMK2N2 and MPDZ. Interacts with FOXO3. Interacts (when in a kinase inactive state not associated with calmodulin) with ARC; leading to target ARC to inactive synapses. Interacts with CAMK2N1; this interaction requires CAMK2B activation by Ca(2+). In terms of processing, autophosphorylation of Thr-287 following activation by Ca(2+)/calmodulin. Phosphorylation of Thr-287 locks the kinase into an activated state.

It localises to the cytoplasm. The protein resides in the cytoskeleton. It is found in the microtubule organizing center. Its subcellular location is the centrosome. The protein localises to the sarcoplasmic reticulum membrane. It localises to the synapse. The enzyme catalyses L-seryl-[protein] + ATP = O-phospho-L-seryl-[protein] + ADP + H(+). It carries out the reaction L-threonyl-[protein] + ATP = O-phospho-L-threonyl-[protein] + ADP + H(+). Activated by Ca(2+)/calmodulin. Binding of calmodulin results in conformational change that relieves intrasteric autoinhibition and allows autophosphorylation of Thr-287 which turns the kinase in a constitutively active form and confers to the kinase a Ca(2+)-independent activity. Its function is as follows. Calcium/calmodulin-dependent protein kinase that functions autonomously after Ca(2+)/calmodulin-binding and autophosphorylation, and is involved in dendritic spine and synapse formation, neuronal plasticity and regulation of sarcoplasmic reticulum Ca(2+) transport in skeletal muscle. In neurons, plays an essential structural role in the reorganization of the actin cytoskeleton during plasticity by binding and bundling actin filaments in a kinase-independent manner. This structural function is required for correct targeting of CaMK2A, which acts downstream of NMDAR to promote dendritic spine and synapse formation and maintain synaptic plasticity which enables long-term potentiation (LTP) and hippocampus-dependent learning. In developing hippocampal neurons, promotes arborization of the dendritic tree and in mature neurons, promotes dendritic remodeling. Also regulates the migration of developing neurons. Participates in the modulation of skeletal muscle function in response to exercise. In slow-twitch muscles, is involved in regulation of sarcoplasmic reticulum (SR) Ca(2+) transport and in fast-twitch muscle participates in the control of Ca(2+) release from the SR through phosphorylation of triadin, a ryanodine receptor-coupling factor, and phospholamban (PLN/PLB), an endogenous inhibitor of SERCA2A/ATP2A2. In response to interferon-gamma (IFN-gamma) stimulation, catalyzes phosphorylation of STAT1, stimulating the JAK-STAT signaling pathway. Phosphorylates reticulophagy regulator RETREG1 at 'Thr-134' under endoplasmic reticulum stress conditions which enhances RETREG1 oligomerization and its membrane scission and reticulophagy activity. This Mus musculus (Mouse) protein is Calcium/calmodulin-dependent protein kinase type II subunit beta (Camk2b).